A 237-amino-acid polypeptide reads, in one-letter code: Phosphoribosylaminoimidazole-succinocarboxamide synthase (237 aa).

This sequence belongs to the SAICAR synthetase family.

It carries out the reaction 5-amino-1-(5-phospho-D-ribosyl)imidazole-4-carboxylate + L-aspartate + ATP = (2S)-2-[5-amino-1-(5-phospho-beta-D-ribosyl)imidazole-4-carboxamido]succinate + ADP + phosphate + 2 H(+). It functions in the pathway purine metabolism; IMP biosynthesis via de novo pathway; 5-amino-1-(5-phospho-D-ribosyl)imidazole-4-carboxamide from 5-amino-1-(5-phospho-D-ribosyl)imidazole-4-carboxylate: step 1/2. This is Phosphoribosylaminoimidazole-succinocarboxamide synthase from Pectobacterium atrosepticum (strain SCRI 1043 / ATCC BAA-672) (Erwinia carotovora subsp. atroseptica).